A 124-amino-acid polypeptide reads, in one-letter code: Protein YebF (124 aa).

The signal sequence occupies residues Met1–Ala27. The YebF/Cmi domain maps to Lys36–Leu123. A disulfide bridge links Cys40 with Cys113.

The protein belongs to the YebF family.

It is found in the secreted. This is Protein YebF from Photorhabdus laumondii subsp. laumondii (strain DSM 15139 / CIP 105565 / TT01) (Photorhabdus luminescens subsp. laumondii).